Reading from the N-terminus, the 156-residue chain is Small ribosomal subunit protein uS7 (156 aa).

It belongs to the universal ribosomal protein uS7 family. As to quaternary structure, part of the 30S ribosomal subunit. Contacts proteins S9 and S11.

In terms of biological role, one of the primary rRNA binding proteins, it binds directly to 16S rRNA where it nucleates assembly of the head domain of the 30S subunit. Is located at the subunit interface close to the decoding center, probably blocks exit of the E-site tRNA. The protein is Small ribosomal subunit protein uS7 of Brevibacillus brevis (strain 47 / JCM 6285 / NBRC 100599).